The primary structure comprises 380 residues: Guanine nucleotide-binding protein subunit beta (380 aa).

WD repeat units lie at residues Gly-64–Ala-103, Leu-106–Gly-145, Gly-155–Ile-195, Gly-203–Arg-243, Gly-247–Val-286, Asn-296–Asn-335, and Ser-342–Val-380.

The protein belongs to the WD repeat G protein beta family. In terms of assembly, g proteins are composed of 3 units, alpha, beta and gamma. Interacts with the gamma subunits RGG1 and RGG2.

Its subcellular location is the cell membrane. Guanine nucleotide-binding proteins (G proteins) are involved as modulators or transducers in various transmembrane signaling systems. The beta and gamma chains are required for the GTPase activity, for replacement of GDP by GTP, and for G protein-effector interaction. This chain is Guanine nucleotide-binding protein subunit beta, found in Oryza sativa subsp. indica (Rice).